The sequence spans 324 residues: Probable non-intrinsic ABC protein 5 (324 aa).

The ABC transporter domain maps to 2-111; it reads DRERYDKVIE…ADLTLVMKDG (110 aa). A run of 2 helical transmembrane segments spans residues 212 to 232 and 259 to 279; these read YITLAYGGALVPFILLGQILF and LSTLMVVYVALAFGSSLCILV. The region spanning 222–324 is the ABC transmembrane type-1 domain; that stretch reads VPFILLGQIL…TCSKTCIYSS (103 aa).

It belongs to the ABC transporter superfamily.

It is found in the membrane. In Arabidopsis thaliana (Mouse-ear cress), this protein is Probable non-intrinsic ABC protein 5 (NAP5).